The sequence spans 214 residues: ER lumen protein-retaining receptor (214 aa).

The Lumenal portion of the chain corresponds to 1-4 (MVFN). Residues 5–23 (LFRISADLVHLLSIYFLLT) traverse the membrane as a helical segment. Residues 24–37 (KIISHKNCIGISLR) lie on the Cytoplasmic side of the membrane. The chain crosses the membrane as a helical span at residues 38-55 (SQILFFIVWVTRYLDIFY). The Lumenal portion of the chain corresponds to 56-63 (NFYSLYNT). A helical membrane pass occupies residues 64 to 82 (ILKIVYLTTSAYTIYLISK). Over 83-98 (RFRATYDKIHDTLNVW) the chain is Cytoplasmic. A helical membrane pass occupies residues 99 to 112 (YLIVPCIVLAFIFT). The Lumenal portion of the chain corresponds to 113 to 119 (EDYSITE). Residues 120-139 (ICWTFSIFLEAVAILPQILL) form a helical membrane-spanning segment. Topologically, residues 140-151 (LRSTGEVENLNS) are cytoplasmic. Residues 152–170 (QYIFCLGLYRALYIINWIY) traverse the membrane as a helical segment. Residues 171–181 (RYATEQSYWSP) lie on the Lumenal side of the membrane. The helical transmembrane segment at 182–202 (LTWICGSIQTLLYVEYFYYYI) threads the bilayer. The Cytoplasmic segment spans residues 203–214 (KSRVEGTKFVLP).

It belongs to the ERD2 family.

The protein resides in the endoplasmic reticulum membrane. Its function is as follows. Required for the retention of luminal endoplasmic reticulum proteins. Determines the specificity of the luminal ER protein retention system. Also required for normal vesicular traffic through the Golgi. This Entamoeba histolytica (strain ATCC 30459 / HM-1:IMSS / ABRM) protein is ER lumen protein-retaining receptor.